We begin with the raw amino-acid sequence, 374 residues long: MAKRDYYEVLGVNRNATEAEVKKAFRRLAMKYHPDRNPGDKDAEVKFKEAREAYEVLCDSRKRASYDQFGHAGVEQTFGGAGAGGFGFGDLGDIFGDIFGDIFGGARGGQAREQRGADLAYELVLSLEEAVHGLSRTIKVPTWINCKTCNGSGAKGSSPATCPRCNGSGQMRMQHGFLQVQQTCSVCRGRGQVIKDPCTDCHGQGRQQQTKTLSVKIPPGIDTGDRIRLAGEGEAGLFGAPPGDLYVQVRVKPHPLFHREGNDLHSEVPMDFTTAALGGEMEIPTLDGSVRLTIPPETQGGKQFRLRGKGVKALRSGAVGDLICHIVVETPVKLSPEQKDYLKQFAELLKKDEKNHSPRTRNWFDSVKDFFTSK.

The 66-residue stretch at 5–70 (DYYEVLGVNR…RKRASYDQFG (66 aa)) folds into the J domain. A CR-type zinc finger spans residues 133–210 (GLSRTIKVPT…CHGQGRQQQT (78 aa)). Positions 146, 149, 162, 165, 184, 187, 198, and 201 each coordinate Zn(2+). CXXCXGXG motif repeat units lie at residues 146 to 153 (CKTCNGSG), 162 to 169 (CPRCNGSG), 184 to 191 (CSVCRGRG), and 198 to 205 (CTDCHGQG).

This sequence belongs to the DnaJ family. Homodimer. Zn(2+) serves as cofactor.

The protein localises to the cytoplasm. Functionally, participates actively in the response to hyperosmotic and heat shock by preventing the aggregation of stress-denatured proteins and by disaggregating proteins, also in an autonomous, DnaK-independent fashion. Unfolded proteins bind initially to DnaJ; upon interaction with the DnaJ-bound protein, DnaK hydrolyzes its bound ATP, resulting in the formation of a stable complex. GrpE releases ADP from DnaK; ATP binding to DnaK triggers the release of the substrate protein, thus completing the reaction cycle. Several rounds of ATP-dependent interactions between DnaJ, DnaK and GrpE are required for fully efficient folding. Also involved, together with DnaK and GrpE, in the DNA replication of plasmids through activation of initiation proteins. The chain is Chaperone protein DnaJ from Coxiella burnetii (strain CbuG_Q212) (Coxiella burnetii (strain Q212)).